Reading from the N-terminus, the 165-residue chain is ATP synthase subunit b (165 aa).

Residues 5–25 (LVGITWEFVFQIVNTFIIFLL) form a helical membrane-spanning segment.

The protein belongs to the ATPase B chain family. In terms of assembly, F-type ATPases have 2 components, F(1) - the catalytic core - and F(0) - the membrane proton channel. F(1) has five subunits: alpha(3), beta(3), gamma(1), delta(1), epsilon(1). F(0) has three main subunits: a(1), b(2) and c(10-14). The alpha and beta chains form an alternating ring which encloses part of the gamma chain. F(1) is attached to F(0) by a central stalk formed by the gamma and epsilon chains, while a peripheral stalk is formed by the delta and b chains.

The protein resides in the cell membrane. Functionally, f(1)F(0) ATP synthase produces ATP from ADP in the presence of a proton or sodium gradient. F-type ATPases consist of two structural domains, F(1) containing the extramembraneous catalytic core and F(0) containing the membrane proton channel, linked together by a central stalk and a peripheral stalk. During catalysis, ATP synthesis in the catalytic domain of F(1) is coupled via a rotary mechanism of the central stalk subunits to proton translocation. Component of the F(0) channel, it forms part of the peripheral stalk, linking F(1) to F(0). This is ATP synthase subunit b from Clostridioides difficile (strain 630) (Peptoclostridium difficile).